Reading from the N-terminus, the 221-residue chain is Deoxyribose-phosphate aldolase (221 aa).

Residue Asp-89 is the Proton donor/acceptor of the active site. The Schiff-base intermediate with acetaldehyde role is filled by Lys-151. Lys-180 serves as the catalytic Proton donor/acceptor.

It belongs to the DeoC/FbaB aldolase family. DeoC type 1 subfamily.

The protein localises to the cytoplasm. The enzyme catalyses 2-deoxy-D-ribose 5-phosphate = D-glyceraldehyde 3-phosphate + acetaldehyde. The protein operates within carbohydrate degradation; 2-deoxy-D-ribose 1-phosphate degradation; D-glyceraldehyde 3-phosphate and acetaldehyde from 2-deoxy-alpha-D-ribose 1-phosphate: step 2/2. In terms of biological role, catalyzes a reversible aldol reaction between acetaldehyde and D-glyceraldehyde 3-phosphate to generate 2-deoxy-D-ribose 5-phosphate. The polypeptide is Deoxyribose-phosphate aldolase (Mesomycoplasma hyopneumoniae (strain 232) (Mycoplasma hyopneumoniae)).